The sequence spans 264 residues: Acyl-[acyl-carrier-protein]--UDP-N-acetylglucosamine O-acyltransferase (264 aa).

This sequence belongs to the transferase hexapeptide repeat family. LpxA subfamily. Homotrimer.

It localises to the cytoplasm. The enzyme catalyses a (3R)-hydroxyacyl-[ACP] + UDP-N-acetyl-alpha-D-glucosamine = a UDP-3-O-[(3R)-3-hydroxyacyl]-N-acetyl-alpha-D-glucosamine + holo-[ACP]. The protein operates within glycolipid biosynthesis; lipid IV(A) biosynthesis; lipid IV(A) from (3R)-3-hydroxytetradecanoyl-[acyl-carrier-protein] and UDP-N-acetyl-alpha-D-glucosamine: step 1/6. Its function is as follows. Involved in the biosynthesis of lipid A, a phosphorylated glycolipid that anchors the lipopolysaccharide to the outer membrane of the cell. This chain is Acyl-[acyl-carrier-protein]--UDP-N-acetylglucosamine O-acyltransferase, found in Glaesserella parasuis serovar 5 (strain SH0165) (Haemophilus parasuis).